The sequence spans 447 residues: N-succinylarginine dihydrolase (447 aa).

Residues 19–28 (AGLSFGNEAS), asparagine 110, and 137–138 (HR) contribute to the substrate site. Glutamate 174 is a catalytic residue. Arginine 213 provides a ligand contact to substrate. Histidine 249 is a catalytic residue. Residues aspartate 251 and asparagine 364 each coordinate substrate. The active-site Nucleophile is the cysteine 370.

Belongs to the succinylarginine dihydrolase family. As to quaternary structure, homodimer.

The enzyme catalyses N(2)-succinyl-L-arginine + 2 H2O + 2 H(+) = N(2)-succinyl-L-ornithine + 2 NH4(+) + CO2. Its pathway is amino-acid degradation; L-arginine degradation via AST pathway; L-glutamate and succinate from L-arginine: step 2/5. Functionally, catalyzes the hydrolysis of N(2)-succinylarginine into N(2)-succinylornithine, ammonia and CO(2). In Yersinia enterocolitica serotype O:8 / biotype 1B (strain NCTC 13174 / 8081), this protein is N-succinylarginine dihydrolase.